The sequence spans 297 residues: Formamidopyrimidine-DNA glycosylase (297 aa).

Pro2 serves as the catalytic Schiff-base intermediate with DNA. The Proton donor role is filled by Glu3. Residue Lys58 is the Proton donor; for beta-elimination activity of the active site. 3 residues coordinate DNA: His104, Arg127, and Lys170. Residues 261–297 form an FPG-type zinc finger; it reads NVYDREGEACRTPGCTGTVERMTQAGRSTFHCPQCQR. Arg287 serves as the catalytic Proton donor; for delta-elimination activity.

The protein belongs to the FPG family. As to quaternary structure, monomer. It depends on Zn(2+) as a cofactor.

It catalyses the reaction Hydrolysis of DNA containing ring-opened 7-methylguanine residues, releasing 2,6-diamino-4-hydroxy-5-(N-methyl)formamidopyrimidine.. It carries out the reaction 2'-deoxyribonucleotide-(2'-deoxyribose 5'-phosphate)-2'-deoxyribonucleotide-DNA = a 3'-end 2'-deoxyribonucleotide-(2,3-dehydro-2,3-deoxyribose 5'-phosphate)-DNA + a 5'-end 5'-phospho-2'-deoxyribonucleoside-DNA + H(+). Its function is as follows. Involved in base excision repair of DNA damaged by oxidation or by mutagenic agents. Acts as a DNA glycosylase that recognizes and removes damaged bases. Has a preference for oxidized purines, such as 7,8-dihydro-8-oxoguanine (8-oxoG). Has AP (apurinic/apyrimidinic) lyase activity and introduces nicks in the DNA strand. Cleaves the DNA backbone by beta-delta elimination to generate a single-strand break at the site of the removed base with both 3'- and 5'-phosphates. This Allorhizobium ampelinum (strain ATCC BAA-846 / DSM 112012 / S4) (Agrobacterium vitis (strain S4)) protein is Formamidopyrimidine-DNA glycosylase.